We begin with the raw amino-acid sequence, 675 residues long: Protein C-mannosyl-transferase DPY19L1 (675 aa).

Residues 1-22 (MEGRPPPEGRPPPRPRTGRAPR) are disordered. Transmembrane regions (helical) follow at residues 66 to 88 (LYYSYFKTIVEAPSFLNGVWMIM), 156 to 176 (ACFYVAVIFILNGLMMALFFI), 186 to 208 (LGGLVTVLCFFFNHGECTRVMWT), 236 to 254 (LYRGSLIALCISNVFFMLP), 260 to 279 (FVLLTQIASLFAVYVVGYID), 286 to 303 (IIYIHMISLALCFVLMFG), 309 to 325 (TSYYASSLVIIWGILAM), 334 to 354 (VSELSLWVIQGCFWLFGTVIL), 414 to 434 (VVLVVFVAIVRKIISDMWGVL), 449 to 469 (GELVYHALQLLAYTALGILIM), and 491 to 511 (LFGWLFCKVHPGAIVFAILAA).

The protein belongs to the dpy-19 family. As to expression, widely expressed.

It localises to the endoplasmic reticulum membrane. It carries out the reaction L-tryptophyl-[protein] + a di-trans,poly-cis-dolichyl beta-D-mannosyl phosphate = C-alpha-D-mannosyl-L-tryptophyl-[protein] + a di-trans,poly-cis-dolichyl phosphate + H(+). It functions in the pathway protein modification; protein glycosylation. Its function is as follows. C-mannosyltransferase that mediates the C-mannosylation tryptophan residues on target proteins. The reaction occurs on the luminal side of the endoplasmic reticulum and involves the transfer of a mannose unit from a dolichylphosphate mannose (Dol-P-Man) donor to an acceptor protein containing a WxxW consensus sequence. C-mannosylates the first two tryptophans in the WxxWxxWxxC motif in thrombospondin (TSP) type-1 of UNC5A. Regulates neurite extension during development. The protein is Protein C-mannosyl-transferase DPY19L1 (DPY19L1) of Homo sapiens (Human).